The following is a 199-amino-acid chain: MYEGVVQDLIDELGRLPGVGPKGAQRIAFHLLQADPADVRRLADVLLEVKAKVKFCSICFNVSQDDQCRICRDPRRDPSVLCVVEEYKDVVAIERTREFRGRYHVLGGAISPIDGVGPEQLRIRELMVRLADGTITEVILATDPNLEGEATATYLTRMLKPLELRVTRLASGLPVGGDLEYADEVTLGRAFAGRRSADD.

A C4-type zinc finger spans residues 56–71 (CSICFNVSQDDQCRIC). Residues 79 to 174 (SVLCVVEEYK…RVTRLASGLP (96 aa)) enclose the Toprim domain.

It belongs to the RecR family.

In terms of biological role, may play a role in DNA repair. It seems to be involved in an RecBC-independent recombinational process of DNA repair. It may act with RecF and RecO. In Nocardioides sp. (strain ATCC BAA-499 / JS614), this protein is Recombination protein RecR.